Reading from the N-terminus, the 316-residue chain is Protoheme IX farnesyltransferase (316 aa).

9 consecutive transmembrane segments (helical) span residues valine 34–asparagine 54, proline 55–leucine 75, isoleucine 95–phenylalanine 115, isoleucine 118–phenylalanine 138, isoleucine 155–glycine 175, isoleucine 182–phenylalanine 202, isoleucine 228–leucine 250, alanine 254–methionine 273, and phenylalanine 287–isoleucine 307.

It belongs to the UbiA prenyltransferase family. Protoheme IX farnesyltransferase subfamily.

The protein resides in the cell inner membrane. It catalyses the reaction heme b + (2E,6E)-farnesyl diphosphate + H2O = Fe(II)-heme o + diphosphate. The protein operates within porphyrin-containing compound metabolism; heme O biosynthesis; heme O from protoheme: step 1/1. Its function is as follows. Converts heme B (protoheme IX) to heme O by substitution of the vinyl group on carbon 2 of heme B porphyrin ring with a hydroxyethyl farnesyl side group. This chain is Protoheme IX farnesyltransferase, found in Rhizobium meliloti (strain 1021) (Ensifer meliloti).